Consider the following 174-residue polypeptide: Probable adenylyl-sulfate kinase (174 aa).

10–17 (GPSGAGKT) provides a ligand contact to ATP. The Phosphoserine intermediate role is filled by serine 84.

The protein belongs to the APS kinase family.

It carries out the reaction adenosine 5'-phosphosulfate + ATP = 3'-phosphoadenylyl sulfate + ADP + H(+). Its pathway is sulfur metabolism; hydrogen sulfide biosynthesis; sulfite from sulfate: step 2/3. Its function is as follows. Catalyzes the synthesis of activated sulfate. In Pyrococcus abyssi (strain GE5 / Orsay), this protein is Probable adenylyl-sulfate kinase (cysC).